A 79-amino-acid chain; its full sequence is Conotoxin ArMSGL-021 (79 aa).

Positions 1 to 20 (MSRLGIMVLTLLLLVFIVTS) are cleaved as a signal peptide. A propeptide spanning residues 21 to 44 (HQDAGEKQATHRGAINFRWRRSLI) is cleaved from the precursor. Cystine bridges form between C52–C64, C56–C73, and C63–C77. Leucine amide is present on L78.

This sequence belongs to the conotoxin O3 superfamily. As to expression, expressed by the venom duct.

It is found in the secreted. This Conus arenatus (Sand-dusted cone) protein is Conotoxin ArMSGL-021.